A 173-amino-acid chain; its full sequence is Alpha-crystallin A chain (173 aa).

Position 1 is an N-acetylmethionine (Met-1). The required for complex formation with BFSP1 and BFSP2 stretch occupies residues 1–63; sequence MDVTIQHPWF…RTVLDSGISE (63 aa). Gln-6 bears the Deamidated glutamine; partial mark. Ser-45 bears the Phosphoserine mark. Gln-50 carries the post-translational modification Deamidated glutamine; partial. Residues 52–162 enclose the sHSP domain; the sequence is LFRTVLDSGI…SHSERAIPVS (111 aa). Lys-99 carries the post-translational modification N6-acetyllysine. Residue His-100 participates in Zn(2+) binding. Asn-101 is subject to Deamidated asparagine; partial. Positions 102 and 107 each coordinate Zn(2+). Residue Ser-122 is modified to Phosphoserine. The residue at position 123 (Asn-123) is a Deamidated asparagine; partial. Residues Cys-131 and Cys-142 are joined by a disulfide bond. Residue Gln-147 is modified to Deamidated glutamine; partial. The tract at residues 147–173 is disordered; the sequence is QSGMDASHSERAIPVSREEKPSSAPSS. Residues 153–167 are compositionally biased toward basic and acidic residues; it reads SHSERAIPVSREEKP. His-154 is a Zn(2+) binding site. Ser-162 is a glycosylation site (O-linked (GlcNAc) serine).

The protein belongs to the small heat shock protein (HSP20) family. As to quaternary structure, heteromer composed of three CRYAA and one CRYAB subunits. Inter-subunit bridging via zinc ions enhances stability, which is crucial as there is no protein turn over in the lens. Can also form homodimers and homotetramers (dimers of dimers) which serve as the building blocks of homooligomers. Within homooligomers, the zinc-binding motif is created from residues of 3 different molecules. His-100 and Glu-102 from one molecule are ligands of the zinc ion, and His-107 and His-154 residues from additional molecules complete the site with tetrahedral coordination geometry. Part of a complex required for lens intermediate filament formation composed of BFSP1, BFSP2 and CRYAA. Undergoes age-dependent proteolytical cleavage at the C-terminus.

It localises to the cytoplasm. Its subcellular location is the nucleus. Functionally, contributes to the transparency and refractive index of the lens. In its oxidized form (absence of intramolecular disulfide bond), acts as a chaperone, preventing aggregation of various proteins under a wide range of stress conditions. Required for the correct formation of lens intermediate filaments as part of a complex composed of BFSP1, BFSP2 and CRYAA. This is Alpha-crystallin A chain (CRYAA) from Procavia capensis (Rock hyrax).